Consider the following 72-residue polypeptide: Large ribosomal subunit protein bL31c (72 aa).

This sequence belongs to the bacterial ribosomal protein bL31 family. Type A subfamily. Part of the 50S ribosomal subunit.

It is found in the plastid. The protein localises to the chloroplast. Its function is as follows. Binds the 23S rRNA. The protein is Large ribosomal subunit protein bL31c (rpl31) of Thalassiosira pseudonana (Marine diatom).